A 132-amino-acid chain; its full sequence is MGDYIVVLEAPIIVKDVESVEEAIEAAVNKVMTALEKEKLDFVRVELGYSKCPVCGAHFESAFVVGNIGLVGIYLTLKVFNAQSLEHAERIAKAVVGKALKKVPLKLFEIRELHDGREENNGIEAGENETNA.

This sequence belongs to the UPF0212 family.

The protein is UPF0212 protein PYRAB08340 of Pyrococcus abyssi (strain GE5 / Orsay).